A 269-amino-acid polypeptide reads, in one-letter code: Probable 3-deoxy-manno-octulosonic acid transferase (269 aa).

Its subcellular location is the cytoplasm. It catalyses the reaction an alpha-Kdo-(2-&gt;4)-alpha-Kdo-(2-&gt;6)-lipid IVA + CMP-3-deoxy-beta-D-manno-octulosonate = an alpha-Kdo-(2-&gt;4)-alpha-Kdo-(2-&gt;4)-alpha-Kdo-(2-&gt;6)-lipid IVA + CMP + H(+). Its pathway is bacterial outer membrane biogenesis; LPS core biosynthesis. Functionally, involved in the biosynthesis of the core oligosaccharide region of lipopolysaccharide (LPS). Required for the addition of 3-deoxy-D-manno-oct-2-ulosonic acid III (KdoIII) to the KdoII residue of the inner lipopolysaccharide core. The chain is Probable 3-deoxy-manno-octulosonic acid transferase from Salmonella typhimurium (strain LT2 / SGSC1412 / ATCC 700720).